A 121-amino-acid polypeptide reads, in one-letter code: Keratin-associated protein 1-4 (121 aa).

This sequence belongs to the KRTAP type 1 family. Interacts with hair keratins. Expressed in the middle/upper portions of the hair cortex, in the region termed the keratogenous zone.

Its function is as follows. In the hair cortex, hair keratin intermediate filaments are embedded in an interfilamentous matrix, consisting of hair keratin-associated proteins (KRTAP), which are essential for the formation of a rigid and resistant hair shaft through their extensive disulfide bond cross-linking with abundant cysteine residues of hair keratins. The matrix proteins include the high-sulfur and high-glycine-tyrosine keratins. This chain is Keratin-associated protein 1-4 (KRTAP1-4), found in Homo sapiens (Human).